The following is a 283-amino-acid chain: Phospholipid phosphatase 1 (283 aa).

At Met-1 to Arg-6 the chain is on the cytoplasmic side. Positions Thr-5–Leu-7 match the PDZ-binding; involved in localization to the apical cell membrane motif. A helical transmembrane segment spans residues Leu-7–Leu-27. The Extracellular segment spans residues Thr-28–Thr-53. The helical transmembrane segment at Ile-54–Gly-74 threads the bilayer. The Cytoplasmic portion of the chain corresponds to Glu-75–Ser-88. Residues Phe-89–Val-109 traverse the membrane as a helical segment. The Extracellular portion of the chain corresponds to Ser-110–Arg-164. The interval Lys-120–Pro-128 is phosphatase sequence motif I. An N-linked (GlcNAc...) asparagine glycan is attached at Asn-142. The chain crosses the membrane as a helical span at residues Leu-165–Tyr-185. Residues Tyr-168–His-171 are phosphatase sequence motif II. The active-site Proton donors is the His-171. Over Leu-186–Arg-199 the chain is Cytoplasmic. A helical transmembrane segment spans residues Pro-200–Asp-220. Residues Ser-216–Asp-227 form a phosphatase sequence motif III region. The Extracellular segment spans residues Tyr-221 to Thr-229. Residue His-223 is the Nucleophile of the active site. The chain crosses the membrane as a helical span at residues Val-230–Phe-250. Residues Lys-251–Pro-283 lie on the Cytoplasmic side of the membrane. The interval Lys-260–Pro-283 is disordered. Over residues His-269 to Pro-283 the composition is skewed to polar residues.

Belongs to the PA-phosphatase related phosphoesterase family. As to quaternary structure, forms functional homodimers and homooligomers that are not required for substrate recognition and catalytic activity. Can also form heterooligomers with PLPP2 and PLPP3. Post-translationally, N-glycosylated. N-linked sugars are of the complex type. N-glycosylation is not required for the phosphatase activity. As to expression, widely expressed. Highly expressed in kidney and lung. Almost undetectable in brain, heart, bone, muscle or spleen.

Its subcellular location is the cell membrane. It localises to the apical cell membrane. It is found in the membrane raft. The protein localises to the membrane. The protein resides in the caveola. The enzyme catalyses a 1,2-diacyl-sn-glycero-3-phosphate + H2O = a 1,2-diacyl-sn-glycerol + phosphate. The catalysed reaction is 1,2-dihexadecanoyl-sn-glycero-3-phosphate + H2O = 1,2-dihexadecanoyl-sn-glycerol + phosphate. It carries out the reaction 1,2-di-(9Z-octadecenoyl)-sn-glycero-3-phosphate + H2O = 1,2-di-(9Z-octadecenoyl)-sn-glycerol + phosphate. It catalyses the reaction a monoacyl-sn-glycero-3-phosphate + H2O = a monoacylglycerol + phosphate. The enzyme catalyses (9Z)-octadecenoyl-sn-glycero-3-phosphate + H2O = (9Z-octadecenoyl)-glycerol + phosphate. The catalysed reaction is a 1-acyl-sn-glycero-3-phosphate + H2O = a 1-acyl-sn-glycerol + phosphate. It carries out the reaction 1-(9Z-octadecenoyl)-sn-glycero-3-phosphate + H2O = 1-(9Z-octadecenoyl)-sn-glycerol + phosphate. It catalyses the reaction a 1,2-diacyl-sn-glycerol 3-diphosphate + H2O = a 1,2-diacyl-sn-glycero-3-phosphate + phosphate + H(+). The enzyme catalyses sphing-4-enine 1-phosphate + H2O = sphing-4-enine + phosphate. The catalysed reaction is an N-acylsphing-4-enine 1-phosphate + H2O = an N-acylsphing-4-enine + phosphate. It carries out the reaction N-(octanoyl)-sphing-4-enine-1-phosphate + H2O = N-octanoylsphing-4-enine + phosphate. It catalyses the reaction N-(9Z-octadecenoyl)-ethanolamine phosphate + H2O = N-(9Z-octadecenoyl) ethanolamine + phosphate. The enzyme catalyses 1-hexadecanoyl-2-(9Z-octadecenoyl)-sn-glycero-3-phosphate + H2O = 1-hexadecanoyl-2-(9Z-octadecenoyl)-sn-glycerol + phosphate. Its pathway is lipid metabolism; phospholipid metabolism. Magnesium-independent phospholipid phosphatase. Insensitive to N-ethylmaleimide. Functionally, magnesium-independent phospholipid phosphatase of the plasma membrane that catalyzes the dephosphorylation of a variety of glycerolipid and sphingolipid phosphate esters including phosphatidate/PA, lysophosphatidate/LPA, diacylglycerol pyrophosphate/DGPP, sphingosine 1-phosphate/S1P and ceramide 1-phosphate/C1P. Also acts on N-oleoyl ethanolamine phosphate/N-(9Z-octadecenoyl)-ethanolamine phosphate, a potential physiological compound. Through its extracellular phosphatase activity allows both the hydrolysis and the cellular uptake of these bioactive lipid mediators from the milieu, regulating signal transduction in different cellular processes. It is for instance essential for the extracellular hydrolysis of S1P and subsequent conversion into intracellular S1P. Involved in the regulation of inflammation, platelets activation, cell proliferation and migration among other processes. May also have an intracellular activity to regulate phospholipid-mediated signaling pathways. This chain is Phospholipid phosphatase 1, found in Mus musculus (Mouse).